We begin with the raw amino-acid sequence, 206 residues long: MARYLGPKCKLSRREGTDLFLKSGVKANDEKCKMNTAPGQHGARRARLSDYGLQLRERQKVRRMYGILEGQFKKYYVEASRRKGNTGATLLELLESRLDNVVYRMGFAATRAEARQLVVHKGIMVNGHTCNVPSAQVKAGDVVAVREKAKKQLRIQNAVELAKHRKELSWIDVNTDSLEGTMKSSPDRSELSADINEQLIIELYSK.

Residues Ser-96–Ala-158 form the S4 RNA-binding domain.

It belongs to the universal ribosomal protein uS4 family. As to quaternary structure, part of the 30S ribosomal subunit. Contacts protein S5. The interaction surface between S4 and S5 is involved in control of translational fidelity.

Functionally, one of the primary rRNA binding proteins, it binds directly to 16S rRNA where it nucleates assembly of the body of the 30S subunit. In terms of biological role, with S5 and S12 plays an important role in translational accuracy. This chain is Small ribosomal subunit protein uS4, found in Francisella tularensis subsp. mediasiatica (strain FSC147).